Here is a 140-residue protein sequence, read N- to C-terminus: Large ribosomal subunit protein uL14 (140 aa).

This sequence belongs to the universal ribosomal protein uL14 family.

This chain is Large ribosomal subunit protein uL14 (RpL23-A), found in Aedes aegypti (Yellowfever mosquito).